Here is a 1159-residue protein sequence, read N- to C-terminus: Protocadherin-17 (1159 aa).

An N-terminal signal peptide occupies residues 1-17; sequence MYLSICCCFLLWAPALT. Cadherin domains follow at residues 18–132, 133–243, 244–351, 353–472, 473–583, and 589–695; these read LKNL…APSF, SSDQ…SPVF, EAPS…APSI, FVSV…PPRF, TKGL…APVI, and QNDT…VPRV. Topologically, residues 18–707 are extracellular; that stretch reads LKNLNYSVPE…EQHHWDMSLP (690 aa). N-linked (GlcNAc...) asparagine glycosylation occurs at N22. Positions 186 to 188 match the Cell attachment site motif; that stretch reads RGD. N266, N439, N453, N504, N566, and N590 each carry an N-linked (GlcNAc...) asparagine glycan. Residues 708–728 form a helical membrane-spanning segment; that stretch reads LIVTLSTISIILLAAMITIAV. At 729–1159 the chain is on the cytoplasmic side; it reads KCKRENKEIR…RGNDPVAVRK (431 aa). Disordered stretches follow at residues 858-909 and 1108-1132; these read NFPA…KGSC and SRDS…GRES. The segment covering 867–879 has biased composition (polar residues); that stretch reads GSRQQFVQSSSTF. 2 stretches are compositionally biased toward basic and acidic residues: residues 880–895 and 1120–1132; these read KDPE…HGDS and QLDH…GRES.

It is found in the cell membrane. Functionally, potential calcium-dependent cell-adhesion protein. This chain is Protocadherin-17 (PCDH17), found in Homo sapiens (Human).